Here is a 174-residue protein sequence, read N- to C-terminus: Frataxin homolog, mitochondrial (174 aa).

A mitochondrion-targeting transit peptide spans 1–21 (MIKRSLASLVRVSSVMGRRYM).

This sequence belongs to the frataxin family. In terms of assembly, monomer. Forms a 24-mer complex made up of 8 copies of a trimeric subcomplex. Increments in mitochondrial iron uptake induce stepwise assembly of species ranging from trimers to 24-mers. Interacts with ISU1 with a 1 to 1 stoichiometry; the interaction is direct. Interacts with YHB1, SDH1, SDH2, AIM45 and CIR1. Processed in two steps by mitochondrial processing peptidase (MPP). MPP first cleaves the precursor to intermediate form and subsequently converts the intermediate to mature size protein.

The protein localises to the mitochondrion matrix. The enzyme catalyses 4 Fe(2+) + O2 + 4 H(+) = 4 Fe(3+) + 2 H2O. Functionally, promotes the biosynthesis of heme as well as the assembly and repair of iron-sulfur clusters by delivering Fe(2+) to proteins involved in these pathways. Plays a role in the protection against iron-catalyzed oxidative stress through its ability to catalyze the oxidation of Fe(2+) to Fe(3+). Can store large amounts of the metal in the form of a ferrihydrite mineral by oligomerization. May be involved in regulation of the mitochondrial electron transport chain. This is Frataxin homolog, mitochondrial from Saccharomyces cerevisiae (strain ATCC 204508 / S288c) (Baker's yeast).